A 190-amino-acid chain; its full sequence is Protein SYM1 (190 aa).

4 helical membrane passes run 16–36 (PVLG…VIAQ), 54–74 (IVTW…RTLE), 91–111 (LDQF…MTFM), and 131–151 (LQAN…LVPL).

Belongs to the peroxisomal membrane protein PXMP2/4 family.

Its subcellular location is the mitochondrion inner membrane. Its function is as follows. May be involved in cellular response to stress. Required to maintain mitochondrial DNA (mtDNA) integrity and stability. The protein is Protein SYM1 (SYM1) of Cryptococcus neoformans var. neoformans serotype D (strain B-3501A) (Filobasidiella neoformans).